The chain runs to 338 residues: Ketol-acid reductoisomerase (NADP(+)) (338 aa).

Positions 1-181 constitute a KARI N-terminal Rossmann domain; it reads MKVFYDKDAD…GGGRAGIIET (181 aa). Residues 24 to 27, R47, and S52 contribute to the NADP(+) site; that span reads YGSQ. H107 is an active-site residue. An NADP(+)-binding site is contributed by G133. Residues 182–327 enclose the KARI C-terminal knotted domain; it reads NFREETETDL…GKLRAMMPWI (146 aa). Mg(2+) contacts are provided by D190, E194, E226, and E230. S251 is a substrate binding site.

This sequence belongs to the ketol-acid reductoisomerase family. It depends on Mg(2+) as a cofactor.

The catalysed reaction is (2R)-2,3-dihydroxy-3-methylbutanoate + NADP(+) = (2S)-2-acetolactate + NADPH + H(+). The enzyme catalyses (2R,3R)-2,3-dihydroxy-3-methylpentanoate + NADP(+) = (S)-2-ethyl-2-hydroxy-3-oxobutanoate + NADPH + H(+). The protein operates within amino-acid biosynthesis; L-isoleucine biosynthesis; L-isoleucine from 2-oxobutanoate: step 2/4. It functions in the pathway amino-acid biosynthesis; L-valine biosynthesis; L-valine from pyruvate: step 2/4. In terms of biological role, involved in the biosynthesis of branched-chain amino acids (BCAA). Catalyzes an alkyl-migration followed by a ketol-acid reduction of (S)-2-acetolactate (S2AL) to yield (R)-2,3-dihydroxy-isovalerate. In the isomerase reaction, S2AL is rearranged via a Mg-dependent methyl migration to produce 3-hydroxy-3-methyl-2-ketobutyrate (HMKB). In the reductase reaction, this 2-ketoacid undergoes a metal-dependent reduction by NADPH to yield (R)-2,3-dihydroxy-isovalerate. The chain is Ketol-acid reductoisomerase (NADP(+)) from Cupriavidus metallidurans (strain ATCC 43123 / DSM 2839 / NBRC 102507 / CH34) (Ralstonia metallidurans).